Reading from the N-terminus, the 138-residue chain is U1 small nuclear ribonucleoprotein C (138 aa).

The Matrin-type zinc finger occupies 4–36; the sequence is FYCDYCDTYLTHDSPSVRKTHCSGRKHKENVRD. Tyrosine 8 bears the Phosphotyrosine mark. Serine 17 carries the post-translational modification Phosphoserine. N6-acetyllysine is present on lysine 52. The tract at residues 62–99 is disordered; sequence IPPNLFSAPPLGGPMIPPPHPSMMGPPPPGMMPVGPPP. A compositionally biased stretch (pro residues) spans 72–99; the sequence is LGGPMIPPPHPSMMGPPPPGMMPVGPPP.

Belongs to the U1 small nuclear ribonucleoprotein C family. Component of the U1 snRNP. The U1 snRNP is composed of the U1 snRNA and the 7 core Sm proteins SNRPB, SNRPD1, SNRPD2, SNRPD3, SNRPE, SNRPF and SNRPG that assemble in a heptameric protein ring on the Sm site of the small nuclear RNA to form the core snRNP, and at least 3 U1 snRNP-specific proteins SNRNP70/U1-70K, SNRPA/U1-A and SNRPC/U1-C. SNRPC/U1-C interacts with U1 snRNA and the 5' splice-site region of the pre-mRNA. Interacts (via N-terminus) with TIA1 (via C-terminus); thereby promoting spliceosomal U1 snRNP recruitment to 5' splice sites.

It localises to the nucleus. Component of the spliceosomal U1 snRNP, which is essential for recognition of the pre-mRNA 5' splice-site and the subsequent assembly of the spliceosome. SNRPC/U1-C is directly involved in initial 5' splice-site recognition for both constitutive and regulated alternative splicing. The interaction with the 5' splice-site seems to precede base-pairing between the pre-mRNA and the U1 snRNA. Stimulates commitment or early (E) complex formation by stabilizing the base pairing of the 5' end of the U1 snRNA and the 5' splice-site region. This chain is U1 small nuclear ribonucleoprotein C, found in Monodelphis domestica (Gray short-tailed opossum).